The chain runs to 91 residues: Ragulator complex protein LAMTOR5 homolog (91 aa).

Belongs to the LAMTOR5 family. As to quaternary structure, part of the Ragulator complex.

It is found in the cytoplasm. It localises to the lysosome. In terms of biological role, regulator of the TOR pathway, a signaling cascade that promotes cell growth in response to growth factors, energy levels, and amino acids. As part of the Ragulator complex, may activate the TOR signaling cascade in response to amino acids. The polypeptide is Ragulator complex protein LAMTOR5 homolog (Nematostella vectensis (Starlet sea anemone)).